The following is a 235-amino-acid chain: Small ribosomal subunit protein eS4 (235 aa).

An S4 RNA-binding domain is found at 38 to 99 (VTLLSIIRDY…GESYRVVYND (62 aa)).

The protein belongs to the eukaryotic ribosomal protein eS4 family.

In Thermoplasma acidophilum (strain ATCC 25905 / DSM 1728 / JCM 9062 / NBRC 15155 / AMRC-C165), this protein is Small ribosomal subunit protein eS4 (rps4e).